The chain runs to 188 residues: Elongation factor P (188 aa).

This sequence belongs to the elongation factor P family.

Its subcellular location is the cytoplasm. It participates in protein biosynthesis; polypeptide chain elongation. Its function is as follows. Involved in peptide bond synthesis. Stimulates efficient translation and peptide-bond synthesis on native or reconstituted 70S ribosomes in vitro. Probably functions indirectly by altering the affinity of the ribosome for aminoacyl-tRNA, thus increasing their reactivity as acceptors for peptidyl transferase. This chain is Elongation factor P, found in Bradyrhizobium diazoefficiens (strain JCM 10833 / BCRC 13528 / IAM 13628 / NBRC 14792 / USDA 110).